The primary structure comprises 306 residues: Ribosomal RNA small subunit methyltransferase H (306 aa).

S-adenosyl-L-methionine-binding positions include 37–39 (GGH), Asp56, Asp102, and Gln109.

This sequence belongs to the methyltransferase superfamily. RsmH family.

It is found in the cytoplasm. It carries out the reaction cytidine(1402) in 16S rRNA + S-adenosyl-L-methionine = N(4)-methylcytidine(1402) in 16S rRNA + S-adenosyl-L-homocysteine + H(+). Functionally, specifically methylates the N4 position of cytidine in position 1402 (C1402) of 16S rRNA. This Nautilia profundicola (strain ATCC BAA-1463 / DSM 18972 / AmH) protein is Ribosomal RNA small subunit methyltransferase H.